The chain runs to 351 residues: Cell division protein FtsZ (351 aa).

GTP contacts are provided by residues 31-35 (GAGNN), 118-120 (GTG), Glu-149, Arg-153, and Asp-197.

The protein belongs to the FtsZ family. In terms of assembly, homodimer. Polymerizes to form a dynamic ring structure in a strictly GTP-dependent manner. Interacts directly with several other division proteins. Interacts with FtsA.

Its subcellular location is the cytoplasm. In terms of biological role, essential cell division protein that forms a contractile ring structure (Z ring) at the future cell division site. The regulation of the ring assembly controls the timing and the location of cell division. One of the functions of the FtsZ ring is to recruit other cell division proteins to the septum to produce a new cell wall between the dividing cells. Binds GTP and shows GTPase activity. This is Cell division protein FtsZ from Thermotoga maritima (strain ATCC 43589 / DSM 3109 / JCM 10099 / NBRC 100826 / MSB8).